A 311-amino-acid polypeptide reads, in one-letter code: Oxygen-dependent coproporphyrinogen-III oxidase (311 aa).

Ser-100 is a binding site for substrate. Positions 104 and 114 each coordinate a divalent metal cation. His-114 (proton donor) is an active-site residue. 116-118 is a substrate binding site; that stretch reads NVR. A divalent metal cation is bound by residues His-153 and His-183. Residues 248-283 are important for dimerization; the sequence is YAEFNLVYDRGTLFGLQSGGRTESILMSLPPIVHWE. 266–268 contacts substrate; sequence GGR.

This sequence belongs to the aerobic coproporphyrinogen-III oxidase family. As to quaternary structure, homodimer. The cofactor is a divalent metal cation.

It is found in the cytoplasm. The catalysed reaction is coproporphyrinogen III + O2 + 2 H(+) = protoporphyrinogen IX + 2 CO2 + 2 H2O. The protein operates within porphyrin-containing compound metabolism; protoporphyrin-IX biosynthesis; protoporphyrinogen-IX from coproporphyrinogen-III (O2 route): step 1/1. Functionally, involved in the heme biosynthesis. Catalyzes the aerobic oxidative decarboxylation of propionate groups of rings A and B of coproporphyrinogen-III to yield the vinyl groups in protoporphyrinogen-IX. This Legionella pneumophila (strain Corby) protein is Oxygen-dependent coproporphyrinogen-III oxidase.